Here is a 326-residue protein sequence, read N- to C-terminus: Small ribosomal subunit biogenesis GTPase RsgA (326 aa).

A CP-type G domain is found at 80 to 241 (LSHQMHIIAS…IIDTPGIKGF (162 aa)). GTP is bound by residues 129–132 (NKID) and 183–191 (GHSGVGKST). Residues Cys265, Cys270, His272, and Cys278 each contribute to the Zn(2+) site.

This sequence belongs to the TRAFAC class YlqF/YawG GTPase family. RsgA subfamily. In terms of assembly, monomer. Associates with 30S ribosomal subunit, binds 16S rRNA. It depends on Zn(2+) as a cofactor.

It localises to the cytoplasm. One of several proteins that assist in the late maturation steps of the functional core of the 30S ribosomal subunit. Helps release RbfA from mature subunits. May play a role in the assembly of ribosomal proteins into the subunit. Circularly permuted GTPase that catalyzes slow GTP hydrolysis, GTPase activity is stimulated by the 30S ribosomal subunit. The protein is Small ribosomal subunit biogenesis GTPase RsgA of Flavobacterium psychrophilum (strain ATCC 49511 / DSM 21280 / CIP 103535 / JIP02/86).